Reading from the N-terminus, the 99-residue chain is uncharacterized protein (99 aa).

Residues 76-96 (VLLGLASGMIGGIIGMFMWVL) form a helical membrane-spanning segment.

The protein resides in the host membrane. This is an uncharacterized protein from Haemophilus phage HP1 (strain HP1c1) (Bacteriophage HP1).